The primary structure comprises 539 residues: Prolyl 4-hydroxylase subunit alpha-2 (539 aa).

The N-terminal stretch at 1-16 (MRAVLLVCLLAGLAHA) is a signal peptide. Asn-110 is a glycosylation site (N-linked (GlcNAc...) asparagine). The region spanning 401 to 509 (TSEELQVANY…KWVSNKWIHE (109 aa)) is the Fe2OG dioxygenase domain. Fe cation contacts are provided by His-419, Asp-421, and His-490. Lys-500 is a 2-oxoglutarate binding site.

Belongs to the P4HA family. In terms of assembly, heterotetramer of two alpha chains and two beta chains. Exist either as a phy-2(2)/pdi-2(2) tetramer or as a phy-1/phy-2/pdi-2(2) tetramer. It depends on Fe(2+) as a cofactor. L-ascorbate serves as cofactor.

The protein resides in the endoplasmic reticulum lumen. It carries out the reaction L-prolyl-[collagen] + 2-oxoglutarate + O2 = trans-4-hydroxy-L-prolyl-[collagen] + succinate + CO2. Functionally, catalyzes the post-translational formation of 4-hydroxyproline in -Xaa-Pro-Gly- sequences in collagens and other proteins. The sequence is that of Prolyl 4-hydroxylase subunit alpha-2 (phy-2) from Caenorhabditis elegans.